A 136-amino-acid polypeptide reads, in one-letter code: Succinate dehydrogenase 2 membrane subunit SdhC (136 aa).

Transmembrane regions (helical) follow at residues Arg-32–Leu-52, Ile-70–Ile-90, and Leu-109–Ile-129. Residue His-85 participates in heme binding.

Belongs to the cytochrome b560 family. Part of an enzyme complex containing four subunits: a flavoprotein (SdhA), an iron-sulfur protein (SdhB), plus two membrane-anchoring proteins (SdhC and SdhD). Heme serves as cofactor.

It localises to the cell membrane. In terms of biological role, membrane-anchoring subunit of succinate dehydrogenase 2 (Sdh2). Sdh2 may catalyze the two-electron oxidation of succinate to fumarate with a corresponding reduction of quinone to quinol under low oxygen conditions, when the primary aerobic succinate dehydrogenase (Sdh1) is inhibited. Sdh2 seems to be the generator of the proton motive force (PMF) under hypoxia. This Mycobacterium tuberculosis (strain ATCC 25618 / H37Rv) protein is Succinate dehydrogenase 2 membrane subunit SdhC.